The following is a 530-amino-acid chain: Plexin domain-containing protein 2 (530 aa).

The first 30 residues, 1–30, serve as a signal peptide directing secretion; it reads MARFRRADLAAAGVMLLCHFLTDRFQFAHG. Topologically, residues 31–455 are extracellular; the sequence is EPGHHTNDWI…AEKKGGTLHA (425 aa). Residues asparagine 103 and asparagine 160 are each glycosylated (N-linked (GlcNAc...) asparagine). Residues 327–372 enclose the PSI domain; it reads TCLQFNGCGPCVSSQIGFNCSWCSKLQRCSSGFDRHRQDWVDSGCP. Basic and acidic residues predominate over residues 378 to 387; it reads KEKMCEKTEP. The disordered stretch occupies residues 378-399; it reads KEKMCEKTEPGETSQTTTTSHT. Residues 390-399 show a composition bias toward low complexity; that stretch reads TSQTTTTSHT. The chain crosses the membrane as a helical span at residues 456-476; that stretch reads GLIVGILILVLIIAAAILVTV. Over 477–530 the chain is Cytoplasmic; it reads YMYHHPTSAASIFFIERRPSRWPAMKFRRGSGHPAYAEVEPVGEKEGFIVSEQC. At serine 507 the chain carries Phosphoserine.

This sequence belongs to the plexin family. As to quaternary structure, interacts with CTTN. Expressed in tumor endothelium and in vessels of some normal tissues, such as the muscle and lung.

It is found in the membrane. In terms of biological role, may play a role in tumor angiogenesis. The sequence is that of Plexin domain-containing protein 2 (Plxdc2) from Mus musculus (Mouse).